The sequence spans 258 residues: Myelin proteolipid protein (258 aa).

Residues 1-22 (MFPVRHALLCKALGCYDCCIRC) lie on the Cytoplasmic side of the membrane. Residues Cys-18, Cys-19, and Cys-22 are each lipidated (S-palmitoyl cysteine). A helical membrane pass occupies residues 23 to 48 (LGAVPYPSLVSTLLCFTGMALFCGCG). Topologically, residues 49–82 (HEALAHTEVLVETYFVRNIQDYVILASFIKYFQY) are extracellular. Residues 83-103 (VIYGLASFFFLYCILLLAEGF) traverse the membrane as a helical segment. The Cytoplasmic segment spans residues 104–128 (YTTSAVKQTFGEFRSTRCGRCLSLT). 2 S-palmitoyl cysteine lipidation sites follow: Cys-121 and Cys-124. Residues 129–149 (FIIVTYVLAVIWLAVFAFTAI) form a helical membrane-spanning segment. Residues 150-218 (PSSSSLIWHR…KTKEFFVTYD (69 aa)) are Extracellular-facing. Cys-181 and Cys-200 are oxidised to a cystine. A helical transmembrane segment spans residues 219–239 (LYIAAFAGAGIALLALFLYVV). Residues 240–258 (ATTYNYAVLRFLGRKGLRC) are Cytoplasmic-facing.

Belongs to the myelin proteolipid protein family. Central nervous system. Highest levels in spinal cord and medulla oblongata.

Its subcellular location is the cell membrane. This is the major myelin protein from the central nervous system. It plays an important role in the formation or maintenance of the multilamellar structure of myelin. May be involved in neuron and glial cell differentiation. This Oncorhynchus mykiss (Rainbow trout) protein is Myelin proteolipid protein (plp).